Consider the following 289-residue polypeptide: Acetyl-coenzyme A carboxylase carboxyl transferase subunit beta (289 aa).

In terms of domain architecture, CoA carboxyltransferase N-terminal spans 28–289; it reads VMTKCPKCKK…QGEGMAVWQN (262 aa). Zn(2+)-binding residues include Cys-32, Cys-35, Cys-51, and Cys-54. Residues 32 to 54 form a C4-type zinc finger; the sequence is CPKCKKIMYTKELLKNLKVCVNC.

Belongs to the AccD/PCCB family. In terms of assembly, acetyl-CoA carboxylase is a heterohexamer composed of biotin carboxyl carrier protein (AccB), biotin carboxylase (AccC) and two subunits each of ACCase subunit alpha (AccA) and ACCase subunit beta (AccD). Zn(2+) is required as a cofactor.

The protein resides in the cytoplasm. The enzyme catalyses N(6)-carboxybiotinyl-L-lysyl-[protein] + acetyl-CoA = N(6)-biotinyl-L-lysyl-[protein] + malonyl-CoA. Its pathway is lipid metabolism; malonyl-CoA biosynthesis; malonyl-CoA from acetyl-CoA: step 1/1. Functionally, component of the acetyl coenzyme A carboxylase (ACC) complex. Biotin carboxylase (BC) catalyzes the carboxylation of biotin on its carrier protein (BCCP) and then the CO(2) group is transferred by the transcarboxylase to acetyl-CoA to form malonyl-CoA. The polypeptide is Acetyl-coenzyme A carboxylase carboxyl transferase subunit beta (Bacillus cytotoxicus (strain DSM 22905 / CIP 110041 / 391-98 / NVH 391-98)).